The primary structure comprises 425 residues: Histidine--tRNA ligase (425 aa).

The protein belongs to the class-II aminoacyl-tRNA synthetase family. As to quaternary structure, homodimer.

It localises to the cytoplasm. It carries out the reaction tRNA(His) + L-histidine + ATP = L-histidyl-tRNA(His) + AMP + diphosphate + H(+). The chain is Histidine--tRNA ligase from Shewanella sp. (strain W3-18-1).